The following is a 179-amino-acid chain: Large ribosomal subunit protein bL19 (179 aa).

This sequence belongs to the bacterial ribosomal protein bL19 family.

In terms of biological role, this protein is located at the 30S-50S ribosomal subunit interface and may play a role in the structure and function of the aminoacyl-tRNA binding site. This chain is Large ribosomal subunit protein bL19, found in Rhizobium johnstonii (strain DSM 114642 / LMG 32736 / 3841) (Rhizobium leguminosarum bv. viciae).